An 86-amino-acid chain; its full sequence is Large ribosomal subunit protein bL28 (86 aa).

This sequence belongs to the bacterial ribosomal protein bL28 family.

This is Large ribosomal subunit protein bL28 from Bacteroides thetaiotaomicron (strain ATCC 29148 / DSM 2079 / JCM 5827 / CCUG 10774 / NCTC 10582 / VPI-5482 / E50).